Here is a 31-residue protein sequence, read N- to C-terminus: Delta-conotoxin-like ErVIA (31 aa).

The propeptide occupies Leu-1 to Arg-4. 3 disulfides stabilise this stretch: Cys-5/Cys-21, Cys-12/Cys-25, and Cys-20/Cys-29.

This sequence belongs to the conotoxin O1 superfamily. In terms of tissue distribution, expressed by the venom duct.

It is found in the secreted. In terms of biological role, this toxin activates voltage-gated sodium channels. It shifts the voltage-dependence of activation to more hyperpolarized potentials but has only little effect on channel inactivation. It is active on Nav1.3/SCN3A (EC(50)=3.98 nM), Nav1.4/SCN4A (EC(50)=4.99 nM), Nav1.6/SCN8A (EC(50)=1.27 nM) and Nav1.7/SCN9A (EC(50)=2.42 nM) voltage-gated sodium channels. In vivo, it induces nocifensive or pain-like behaviors in mice when injected intraplantarly. The polypeptide is Delta-conotoxin-like ErVIA (Conus eburneus (Ivory cone)).